The chain runs to 3470 residues: Dynein axonemal heavy chain 5 (3470 aa).

A stem region spans residues 1 to 1938 (MFRIGRRQLW…MIHITDVAFT (1938 aa)). The tract at residues 899 to 918 (EKVRHENASPNGDTSGGGEG) is disordered. 4 AAA regions span residues 1939–2161 (YQNE…VLRT), 2221–2440 (TAIS…IQNL), 2547–2800 (VYPP…IWQG), and 2913–3167 (LYNE…FRRS). Residues 1977-1984 (GPAGTGKT) and 2259-2266 (GPSGSGKT) contribute to the ATP site. Coiled coils occupy residues 3207–3241 (LKEA…VLKE) and 3434–3468 (HALA…AMTE).

This sequence belongs to the dynein heavy chain family. Interacts with DNAL1. Consists of at least two heavy chains and a number of intermediate and light chains.

The protein localises to the cytoplasm. It localises to the cytoskeleton. The protein resides in the cilium axoneme. Functionally, force generating protein of respiratory cilia. Produces force towards the minus ends of microtubules. Dynein has ATPase activity; the force-producing power stroke is thought to occur on release of ADP. Required for structural and functional integrity of the cilia of ependymal cells lining the brain ventricles. This chain is Dynein axonemal heavy chain 5, found in Rattus norvegicus (Rat).